The following is a 100-amino-acid chain: MICOS complex subunit MIC12 (100 aa).

The chain crosses the membrane as a helical span at residues phenylalanine 10–isoleucine 26.

Belongs to the MICOS complex subunit Mic12 family. Component of the mitochondrial contact site and cristae organizing system (MICOS) complex.

Its subcellular location is the mitochondrion inner membrane. Functionally, component of the MICOS complex, a large protein complex of the mitochondrial inner membrane that plays crucial roles in the maintenance of crista junctions, inner membrane architecture, and formation of contact sites to the outer membrane. The polypeptide is MICOS complex subunit MIC12 (AIM5) (Vanderwaltozyma polyspora (strain ATCC 22028 / DSM 70294 / BCRC 21397 / CBS 2163 / NBRC 10782 / NRRL Y-8283 / UCD 57-17) (Kluyveromyces polysporus)).